A 410-amino-acid chain; its full sequence is LL-diaminopimelate aminotransferase (410 aa).

Substrate is bound by residues tyrosine 15 and glycine 42. Residues tyrosine 72, 108–109, tyrosine 132, asparagine 187, tyrosine 218, and 246–248 each bind pyridoxal 5'-phosphate; these read SK and SFS. Residues lysine 109, tyrosine 132, and asparagine 187 each contribute to the substrate site. Residue lysine 249 is modified to N6-(pyridoxal phosphate)lysine. Residues arginine 257 and asparagine 292 each coordinate pyridoxal 5'-phosphate. The substrate site is built by asparagine 292 and arginine 388.

Belongs to the class-I pyridoxal-phosphate-dependent aminotransferase family. LL-diaminopimelate aminotransferase subfamily. In terms of assembly, homodimer. Requires pyridoxal 5'-phosphate as cofactor.

It catalyses the reaction (2S,6S)-2,6-diaminopimelate + 2-oxoglutarate = (S)-2,3,4,5-tetrahydrodipicolinate + L-glutamate + H2O + H(+). The protein operates within amino-acid biosynthesis; L-lysine biosynthesis via DAP pathway; LL-2,6-diaminopimelate from (S)-tetrahydrodipicolinate (aminotransferase route): step 1/1. Involved in the synthesis of meso-diaminopimelate (m-DAP or DL-DAP), required for both lysine and peptidoglycan biosynthesis. Catalyzes the direct conversion of tetrahydrodipicolinate to LL-diaminopimelate. The chain is LL-diaminopimelate aminotransferase from Thermosynechococcus vestitus (strain NIES-2133 / IAM M-273 / BP-1).